The chain runs to 190 residues: Threonylcarbamoyl-AMP synthase (190 aa).

Residues 10 to 190 (PQDKESVYRH…DWHSRQVIRA (181 aa)) form the YrdC-like domain.

This sequence belongs to the SUA5 family. TsaC subfamily.

The protein resides in the cytoplasm. The enzyme catalyses L-threonine + hydrogencarbonate + ATP = L-threonylcarbamoyladenylate + diphosphate + H2O. Required for the formation of a threonylcarbamoyl group on adenosine at position 37 (t(6)A37) in tRNAs that read codons beginning with adenine. Catalyzes the conversion of L-threonine, HCO(3)(-)/CO(2) and ATP to give threonylcarbamoyl-AMP (TC-AMP) as the acyladenylate intermediate, with the release of diphosphate. The protein is Threonylcarbamoyl-AMP synthase of Dichelobacter nodosus (strain VCS1703A).